Reading from the N-terminus, the 143-residue chain is Large ribosomal subunit protein uL16 (143 aa).

Basic residues predominate over residues M1–I17. Residues M1–N20 form a disordered region.

It belongs to the universal ribosomal protein uL16 family. Part of the 50S ribosomal subunit.

Its function is as follows. Binds 23S rRNA and is also seen to make contacts with the A and possibly P site tRNAs. In Zymomonas mobilis subsp. mobilis (strain ATCC 31821 / ZM4 / CP4), this protein is Large ribosomal subunit protein uL16.